Here is a 96-residue protein sequence, read N- to C-terminus: Co-chaperonin GroES (96 aa).

This sequence belongs to the GroES chaperonin family. In terms of assembly, heptamer of 7 subunits arranged in a ring. Interacts with the chaperonin GroEL.

It is found in the cytoplasm. Together with the chaperonin GroEL, plays an essential role in assisting protein folding. The GroEL-GroES system forms a nano-cage that allows encapsulation of the non-native substrate proteins and provides a physical environment optimized to promote and accelerate protein folding. GroES binds to the apical surface of the GroEL ring, thereby capping the opening of the GroEL channel. This is Co-chaperonin GroES from Histophilus somni (strain 129Pt) (Haemophilus somnus).